We begin with the raw amino-acid sequence, 197 residues long: Peptide deformylase (197 aa).

Fe cation-binding residues include Cys-106 and His-148. Glu-149 is an active-site residue. Position 152 (His-152) interacts with Fe cation.

It belongs to the polypeptide deformylase family. Fe(2+) serves as cofactor.

It catalyses the reaction N-terminal N-formyl-L-methionyl-[peptide] + H2O = N-terminal L-methionyl-[peptide] + formate. Functionally, removes the formyl group from the N-terminal Met of newly synthesized proteins. Requires at least a dipeptide for an efficient rate of reaction. N-terminal L-methionine is a prerequisite for activity but the enzyme has broad specificity at other positions. The sequence is that of Peptide deformylase from Mycolicibacterium gilvum (strain PYR-GCK) (Mycobacterium gilvum (strain PYR-GCK)).